We begin with the raw amino-acid sequence, 579 residues long: Zinc finger-containing ubiquitin peptidase 1 (579 aa).

The C2H2-type 1 zinc finger occupies 2–25; the sequence is LSCDICGETVSSEPDMKAHLLIVH. The C2H2-type 2; atypical zinc-finger motif lies at 30 to 53; it reads VICPFCKLSGVNYDEMCFHIETAH. 2 C2H2-type zinc fingers span residues 155–178 and 194–216; these read PECP…KTKH and YDCP…VDLH. The tract at residues 227-249 is MIU; the sequence is NRVQCSRDLELAQQLQQEEDRKR. The interval 250–275 is zUBD/ZHA; that stretch reads RSEESRQEMEEFQKLQRQYGLDNSGG. Residue Lys-263 is modified to N6-acetyllysine. Cys-361 acts as the Nucleophile in catalysis. His-492 acts as the Proton acceptor in catalysis. The active site involves Asp-513.

This sequence belongs to the peptidase C78 family. ZUFSP subfamily. In terms of assembly, interacts with RPA1 and RPA2.

It localises to the cytoplasm. It is found in the nucleus. The enzyme catalyses Thiol-dependent hydrolysis of ester, thioester, amide, peptide and isopeptide bonds formed by the C-terminal Gly of ubiquitin (a 76-residue protein attached to proteins as an intracellular targeting signal).. Deubiquitinase with endodeubiquitinase activity that specifically interacts with and cleaves 'Lys-63'-linked long polyubiquitin chains. Shows only weak activity against 'Lys-11' and 'Lys-48'-linked chains. Plays an important role in genome stability pathways, functioning to prevent spontaneous DNA damage and also promote cellular survival in response to exogenous DNA damage. Modulates the ubiquitination status of replication protein A (RPA) complex proteins in response to replication stress. The sequence is that of Zinc finger-containing ubiquitin peptidase 1 from Bos taurus (Bovine).